We begin with the raw amino-acid sequence, 625 residues long: DNA-directed RNA polymerase subunit gamma (625 aa).

Residues C71, C73, C86, and C89 each contribute to the Zn(2+) site. 3 residues coordinate Mg(2+): D467, D469, and D471.

The protein belongs to the RNA polymerase beta' chain family. RpoC1 subfamily. As to quaternary structure, in cyanobacteria the RNAP catalytic core is composed of 2 alpha, 1 beta, 1 beta', 1 gamma and 1 omega subunit. When a sigma factor is associated with the core the holoenzyme is formed, which can initiate transcription. Mg(2+) serves as cofactor. Requires Zn(2+) as cofactor.

The enzyme catalyses RNA(n) + a ribonucleoside 5'-triphosphate = RNA(n+1) + diphosphate. In terms of biological role, DNA-dependent RNA polymerase catalyzes the transcription of DNA into RNA using the four ribonucleoside triphosphates as substrates. This chain is DNA-directed RNA polymerase subunit gamma, found in Rippkaea orientalis (strain PCC 8801 / RF-1) (Cyanothece sp. (strain PCC 8801)).